The primary structure comprises 714 residues: Fatty acid oxidation complex subunit alpha (714 aa).

The segment at 1 to 190 (MEMASAFTLN…KLGLVDDVVP (190 aa)) is enoyl-CoA hydratase. Positions 306 to 714 (APLNSVGILG…FWKTTATDLQ (409 aa)) are 3-hydroxyacyl-CoA dehydrogenase.

This sequence in the N-terminal section; belongs to the enoyl-CoA hydratase/isomerase family. It in the central section; belongs to the 3-hydroxyacyl-CoA dehydrogenase family. Heterotetramer of two alpha chains (FadJ) and two beta chains (FadI).

Its subcellular location is the cytoplasm. It carries out the reaction a (3S)-3-hydroxyacyl-CoA = a (2E)-enoyl-CoA + H2O. The enzyme catalyses a 4-saturated-(3S)-3-hydroxyacyl-CoA = a (3E)-enoyl-CoA + H2O. It catalyses the reaction a (3S)-3-hydroxyacyl-CoA + NAD(+) = a 3-oxoacyl-CoA + NADH + H(+). The catalysed reaction is (3S)-3-hydroxybutanoyl-CoA = (3R)-3-hydroxybutanoyl-CoA. It functions in the pathway lipid metabolism; fatty acid beta-oxidation. In terms of biological role, catalyzes the formation of a hydroxyacyl-CoA by addition of water on enoyl-CoA. Also exhibits 3-hydroxyacyl-CoA epimerase and 3-hydroxyacyl-CoA dehydrogenase activities. In Escherichia coli O45:K1 (strain S88 / ExPEC), this protein is Fatty acid oxidation complex subunit alpha.